The sequence spans 145 residues: 3-dehydroquinate dehydratase (145 aa).

The active-site Proton acceptor is the tyrosine 22. Substrate-binding residues include asparagine 71, histidine 77, and aspartate 84. The active-site Proton donor is histidine 97. Residues 98 to 99 (IS) and arginine 108 contribute to the substrate site.

The protein belongs to the type-II 3-dehydroquinase family. Homododecamer.

The catalysed reaction is 3-dehydroquinate = 3-dehydroshikimate + H2O. Its pathway is metabolic intermediate biosynthesis; chorismate biosynthesis; chorismate from D-erythrose 4-phosphate and phosphoenolpyruvate: step 3/7. Its function is as follows. Catalyzes a trans-dehydration via an enolate intermediate. The protein is 3-dehydroquinate dehydratase of Thermotoga neapolitana (strain ATCC 49049 / DSM 4359 / NBRC 107923 / NS-E).